The chain runs to 1209 residues: Putative lysine-specific demethylase JMJ16 (1209 aa).

Residues 146–187 (APVFYPSEEEFEDTLNYIAKIRPEAEKYGICRIVPPPSWKPP) form the JmjN domain. The Nuclear localization signal signature appears at 217 to 224 (MKKISKLP). Residues 361-527 (KYAKSGWNLN…HGQIAIELYC (167 aa)) form the JmjC domain. Positions 407, 409, and 495 each coordinate Fe cation. Zn(2+) contacts are provided by Cys617, Cys620, Cys631, Cys633, Cys640, His643, Cys648, and Cys650. The C5HC2 zinc-finger motif lies at 617–667 (CCICFFDLHLSAAGCRCSPEKYSCLTHVKELCSCPWVTKYFLFRYDIDELN). Residues 872-900 (DTRNTISLPTNDQKTMRRDVPSSTSHAEV) are disordered. Residues 875–884 (NTISLPTNDQ) show a composition bias toward polar residues. Residues 974–1032 (VVRRINCNVEPLSYGCVLSGKSWCSRRAIFPKGFRSRVKYINILDPTNMCFYISEILDA) enclose the FYR N-terminal domain. The region spanning 1034 to 1124 (RNSPLFMVYL…RVCTDYWDSR (91 aa)) is the FYR C-terminal domain.

It belongs to the JARID1 histone demethylase family. Interacts with MMD1 in the nucleus of male meiocytes, especially on pachytene chromosomes. Requires Fe(2+) as cofactor. In terms of tissue distribution, confined to inflorescences.

It is found in the nucleus. It carries out the reaction N(6),N(6),N(6)-trimethyl-L-lysyl(4)-[histone H3] + 2-oxoglutarate + O2 = N(6),N(6)-dimethyl-L-lysyl(4)-[histone H3] + formaldehyde + succinate + CO2. The catalysed reaction is N(6),N(6)-dimethyl-L-lysyl(4)-[histone H3] + 2-oxoglutarate + O2 = N(6)-methyl-L-lysyl(4)-[histone H3] + formaldehyde + succinate + CO2. It catalyses the reaction N(6)-methyl-L-lysyl(4)-[histone H3] + 2-oxoglutarate + O2 = L-lysyl(4)-[histone H3] + formaldehyde + succinate + CO2. Its function is as follows. Functions as a histone H3 'Lys-4' (H3K4me) demethylase involved in the negative regulation of gene expression. Active on H3K4me1, H3K4me2 and H3K4me3. Not active on mono-, di- and trimethylated H3K9, H3K27 and H3K36 in somatic cells. However, also active on H3K9 when in complex with MMD1, a meiocyte-specific histone reader. Together with MMD1, promotes gene expression in male meiocytes in an H3K9me3-dependent manner, and contributes to meiotic chromosome condensation by triggering some condensin promoters (e.g. CAP-D3 and CAP-H). Together with JMJ14 and JMJ17, required for plant growth and development. Represses leaf senescence in an age-dependent manner by demethylating H3K4me3 activating histone marks at senescence-associated genes (SAGs) loci, including WRKY53 and SAG201, thus preventing their premature expression. The chain is Putative lysine-specific demethylase JMJ16 from Arabidopsis thaliana (Mouse-ear cress).